The primary structure comprises 291 residues: Stem 31 kDa glycoprotein (291 aa).

N-linked (GlcNAc...) asparagine glycosylation occurs at Asn126.

As to expression, accumulates in the stems of developing soybean seedlings.

Functionally, may function as somatic storage protein during early seedling development. This is Stem 31 kDa glycoprotein (VSP25) from Glycine max (Soybean).